Consider the following 345-residue polypeptide: Holliday junction branch migration complex subunit RuvB (345 aa).

Positions 1–182 (MQRLVEVESV…FGMHFRMQFY (182 aa)) are large ATPase domain (RuvB-L). ATP is bound by residues L21, R22, G63, K66, T67, T68, 129 to 131 (EDY), R172, Y182, and R219. T67 contacts Mg(2+). The tract at residues 183–253 (TEIELAKIIQ…RCKYALDELG (71 aa)) is small ATPAse domain (RuvB-S). The interval 256–345 (ESGFDEMDIN…EDDLTQGKLF (90 aa)) is head domain (RuvB-H). DNA is bound by residues R310 and R315.

The protein belongs to the RuvB family. As to quaternary structure, homohexamer. Forms an RuvA(8)-RuvB(12)-Holliday junction (HJ) complex. HJ DNA is sandwiched between 2 RuvA tetramers; dsDNA enters through RuvA and exits via RuvB. An RuvB hexamer assembles on each DNA strand where it exits the tetramer. Each RuvB hexamer is contacted by two RuvA subunits (via domain III) on 2 adjacent RuvB subunits; this complex drives branch migration. In the full resolvosome a probable DNA-RuvA(4)-RuvB(12)-RuvC(2) complex forms which resolves the HJ.

It is found in the cytoplasm. It catalyses the reaction ATP + H2O = ADP + phosphate + H(+). Its function is as follows. The RuvA-RuvB-RuvC complex processes Holliday junction (HJ) DNA during genetic recombination and DNA repair, while the RuvA-RuvB complex plays an important role in the rescue of blocked DNA replication forks via replication fork reversal (RFR). RuvA specifically binds to HJ cruciform DNA, conferring on it an open structure. The RuvB hexamer acts as an ATP-dependent pump, pulling dsDNA into and through the RuvAB complex. RuvB forms 2 homohexamers on either side of HJ DNA bound by 1 or 2 RuvA tetramers; 4 subunits per hexamer contact DNA at a time. Coordinated motions by a converter formed by DNA-disengaged RuvB subunits stimulates ATP hydrolysis and nucleotide exchange. Immobilization of the converter enables RuvB to convert the ATP-contained energy into a lever motion, pulling 2 nucleotides of DNA out of the RuvA tetramer per ATP hydrolyzed, thus driving DNA branch migration. The RuvB motors rotate together with the DNA substrate, which together with the progressing nucleotide cycle form the mechanistic basis for DNA recombination by continuous HJ branch migration. Branch migration allows RuvC to scan DNA until it finds its consensus sequence, where it cleaves and resolves cruciform DNA. The protein is Holliday junction branch migration complex subunit RuvB of Aliarcobacter butzleri (strain RM4018) (Arcobacter butzleri).